Consider the following 133-residue polypeptide: MAKAANTAAQRARKKVRKNVADGIAHVHASFNNTIITITDRQGNALSWATSGGQGFKGSRKSTPFAAQVAAESAGRVAQDQGIKNLEVRIKGPGPGRESAVRALNNLGIKIQVIEDVTPVPHNGCRPPKRRRI.

Belongs to the universal ribosomal protein uS11 family. Part of the 30S ribosomal subunit. Interacts with proteins S7 and S18. Binds to IF-3.

Functionally, located on the platform of the 30S subunit, it bridges several disparate RNA helices of the 16S rRNA. Forms part of the Shine-Dalgarno cleft in the 70S ribosome. This chain is Small ribosomal subunit protein uS11, found in Ralstonia nicotianae (strain ATCC BAA-1114 / GMI1000) (Ralstonia solanacearum).